A 234-amino-acid chain; its full sequence is NAD-reducing hydrogenase HoxS subunit gamma (234 aa).

One can recognise a 2Fe-2S ferredoxin-type domain in the interval 2–77 (SIQITIDGKT…GLNVEVNDPE (76 aa)). Cys-35, Cys-46, Cys-49, and Cys-61 together coordinate [2Fe-2S] cluster. The 4Fe-4S His(Cys)3-ligated-type domain maps to 77–116 (ELVDMRKALVEFLFAEGNHNCPSCEKSGRCQLQAVGYEVD). 8 residues coordinate [4Fe-4S] cluster: His-95, Cys-97, Cys-100, Cys-106, Cys-145, Cys-148, Cys-151, and Cys-198.

The protein belongs to the complex I 75 kDa subunit family. As to quaternary structure, tetramer of an alpha and a gamma subunits (flavin-containing dimer), and a delta and a nickel-containing beta subunits (hydrogenase dimer). The cofactor is [2Fe-2S] cluster. [4Fe-4S] cluster is required as a cofactor.

It localises to the cytoplasm. The enzyme catalyses H2 + NAD(+) = NADH + H(+). Its function is as follows. Subunits alpha and gamma of HoxS constitute an NADH--oxidoreductase. The protein is NAD-reducing hydrogenase HoxS subunit gamma (hoxU) of Cupriavidus necator (strain ATCC 17699 / DSM 428 / KCTC 22496 / NCIMB 10442 / H16 / Stanier 337) (Ralstonia eutropha).